We begin with the raw amino-acid sequence, 368 residues long: Geranylgeranyl pyrophosphate synthase dpfgD (368 aa).

Isopentenyl diphosphate contacts are provided by Lys48, Arg51, and His80. Mg(2+) is bound by residues Asp87 and Asp91. Dimethylallyl diphosphate is bound at residue Arg96. Arg97 contacts isopentenyl diphosphate. The dimethylallyl diphosphate site is built by Lys174, Thr175, and Gln208. Residue Asp211 coordinates Mg(2+). Dimethylallyl diphosphate-binding residues include Asn215, Lys225, and Lys235.

Belongs to the FPP/GGPP synthase family. Mg(2+) serves as cofactor.

The enzyme catalyses isopentenyl diphosphate + dimethylallyl diphosphate = (2E)-geranyl diphosphate + diphosphate. The catalysed reaction is isopentenyl diphosphate + (2E)-geranyl diphosphate = (2E,6E)-farnesyl diphosphate + diphosphate. It carries out the reaction isopentenyl diphosphate + (2E,6E)-farnesyl diphosphate = (2E,6E,10E)-geranylgeranyl diphosphate + diphosphate. It participates in secondary metabolite biosynthesis; terpenoid biosynthesis. Functionally, geranylgeranyl pyrophosphate synthase; part of the gene cluster that mediates the biosynthesis of diterpenoid pyrones. The first step of the pathway is the synthesis of the alpha-pyrone moiety by the polyketide synthase dpfgA via condensation of one acetyl-CoA starter unit with 3 malonyl-CoA units and 2 methylations. The alpha-pyrone is then combined with geranylgeranyl pyrophosphate (GGPP) formed by the GGPP synthase dpfgD through the action of the prenyltransferase dpfgC to yield a linear alpha-pyrone diterpenoid. Subsequent steps in the diterpenoid pyrone biosynthetic pathway involve the decalin core formation, which is initiated by the epoxidation of the C10-C11 olefin by the FAD-dependent oxidoreductase dpfgE, and is followed by a cyclization cascade catalyzed by the terpene cyclase dpfgB. The short chain dehydrogenase/reductase dpfgG then oxidizes the 8S hydroxy group to a ketone and the short chain dehydrogenase/reductase dpfgH reduces the ketone to the 8R hydroxy group to yield higginsianin B. Higginsianin B is further methylated by the methyltransferase dpfgI to produce the intermediate named FDDP B. The cytochrome P450 monooxygenase dfgpJ then catalyzes a three-step oxidation at C-27 to generate a carboxylic acid as well as C-26 hydroxylation. Finally, methyltransferase dpfgK methylates the carboxylic acid generated by dpfgJ, yielding the final diterpenoid pyrones from the pathway which were named FDDP D and FDDP E. This is Geranylgeranyl pyrophosphate synthase dpfgD from Gibberella zeae (strain ATCC MYA-4620 / CBS 123657 / FGSC 9075 / NRRL 31084 / PH-1) (Wheat head blight fungus).